The following is a 130-amino-acid chain: Small ribosomal subunit protein uS9 (130 aa).

It belongs to the universal ribosomal protein uS9 family.

The chain is Small ribosomal subunit protein uS9 from Methylococcus capsulatus (strain ATCC 33009 / NCIMB 11132 / Bath).